Consider the following 153-residue polypeptide: Two-component response regulator ARR17 (153 aa).

The Response regulatory domain maps to 21-149; it reads HVLAVDDNLI…DVEKLKCHLL (129 aa). The residue at position 82 (Asp-82) is a 4-aspartylphosphate.

The protein belongs to the ARR family. Type-A subfamily. In terms of processing, two-component system major event consists of a His-to-Asp phosphorelay between a sensor histidine kinase (HK) and a response regulator (RR). In plants, the His-to-Asp phosphorelay involves an additional intermediate named Histidine-containing phosphotransfer protein (HPt). This multistep phosphorelay consists of a His-Asp-His-Asp sequential transfer of a phosphate group between first a His and an Asp of the HK protein, followed by the transfer to a conserved His of the HPt protein and finally the transfer to an Asp in the receiver domain of the RR protein.

The protein localises to the nucleus. Its function is as follows. Functions as a response regulator involved in His-to-Asp phosphorelay signal transduction system. Phosphorylation of the Asp residue in the receiver domain activates the ability of the protein to promote the transcription of target genes. Type-A response regulators seem to act as negative regulators of the cytokinin signaling. This is Two-component response regulator ARR17 (ARR17) from Arabidopsis thaliana (Mouse-ear cress).